A 154-amino-acid polypeptide reads, in one-letter code: 6,7-dimethyl-8-ribityllumazine synthase (154 aa).

Residues Trp-22, 56–58, and 80–82 contribute to the 5-amino-6-(D-ribitylamino)uracil site; these read SHE and AVI. 85–86 contacts (2S)-2-hydroxy-3-oxobutyl phosphate; that stretch reads DT. Catalysis depends on His-88, which acts as the Proton donor. Phe-113 is a 5-amino-6-(D-ribitylamino)uracil binding site. Residue Arg-127 participates in (2S)-2-hydroxy-3-oxobutyl phosphate binding.

The protein belongs to the DMRL synthase family.

The enzyme catalyses (2S)-2-hydroxy-3-oxobutyl phosphate + 5-amino-6-(D-ribitylamino)uracil = 6,7-dimethyl-8-(1-D-ribityl)lumazine + phosphate + 2 H2O + H(+). It functions in the pathway cofactor biosynthesis; riboflavin biosynthesis; riboflavin from 2-hydroxy-3-oxobutyl phosphate and 5-amino-6-(D-ribitylamino)uracil: step 1/2. Functionally, catalyzes the formation of 6,7-dimethyl-8-ribityllumazine by condensation of 5-amino-6-(D-ribitylamino)uracil with 3,4-dihydroxy-2-butanone 4-phosphate. This is the penultimate step in the biosynthesis of riboflavin. The chain is 6,7-dimethyl-8-ribityllumazine synthase from Deinococcus geothermalis (strain DSM 11300 / CIP 105573 / AG-3a).